Reading from the N-terminus, the 83-residue chain is Small ribosomal subunit protein bS20 (83 aa).

Residues 60–83 form a disordered region; the sequence is ASKGLIHKNKASRDKSRLAAKLAN.

The protein belongs to the bacterial ribosomal protein bS20 family.

Its function is as follows. Binds directly to 16S ribosomal RNA. The polypeptide is Small ribosomal subunit protein bS20 (Streptococcus thermophilus (strain CNRZ 1066)).